The sequence spans 260 residues: MPIGIFDSGIGGLTVFKEIAASFPKVDLYYLGDTARVPYGNKSKTTIIRYSVECASYLYHNYNVDAIVIACNTASSYALDTLREILPIPVIGVVQPGAESAVKVSKNKKIGVIGTSATIKSNSYFETLKSLDKDLEIYQKACPLFVPLVEEGWIDNEVAKLTVKEYLDDLVKTGIDTLILGCTHYPLLKNTIKGLYPHLNIVDSSVAIVEHLKNIKLNIEETGKRKIFITDESHAFDKLKNMLVGDIKTEKIELSDLCSL.

Substrate is bound by residues 7–8 (DS) and 39–40 (YG). Catalysis depends on Cys-71, which acts as the Proton donor/acceptor. 72 to 73 (NT) is a binding site for substrate. Cys-182 functions as the Proton donor/acceptor in the catalytic mechanism. 183 to 184 (TH) lines the substrate pocket.

It belongs to the aspartate/glutamate racemases family.

It catalyses the reaction L-glutamate = D-glutamate. The protein operates within cell wall biogenesis; peptidoglycan biosynthesis. Functionally, provides the (R)-glutamate required for cell wall biosynthesis. This Sulfurihydrogenibium sp. (strain YO3AOP1) protein is Glutamate racemase.